Consider the following 147-residue polypeptide: TRAP-T-associated universal stress protein TeaD (147 aa).

ATP contacts are provided by residues 8 to 10 (PVD), Val38, 117 to 122 (GAQGTN), and 131 to 133 (SVA).

Belongs to the universal stress protein A family. As to quaternary structure, homodimer or homotetramer; in equilibrium. The dimer/tetramer ratio is ATP-dependent. ATP stabilizes dimer-dimer complexes, with one ATP molecule bound to each monomer.

The protein resides in the cytoplasm. Functionally, ATP-binding protein that negatively regulates activity of the tripartite ATP-independent periplasmic (TRAP) ectoine transport system TeaABC. May regulate uptake according to the ATP status of the cell. This chain is TRAP-T-associated universal stress protein TeaD (teaD), found in Halomonas elongata (strain ATCC 33173 / DSM 2581 / NBRC 15536 / NCIMB 2198 / 1H9).